A 348-amino-acid chain; its full sequence is UDP-glucose 4-epimerase (348 aa).

NAD(+) contacts are provided by residues 12–14 (GYI), 33–37 (DNFHN), 66–67 (DI), Phe-88, and Lys-92. 132–134 (SAT) contributes to the substrate binding site. The Proton acceptor role is filled by Tyr-157. Residues Lys-161 and Tyr-185 each contribute to the NAD(+) site. Residues 185–187 (YFN), 206–208 (NNL), 224–226 (NVF), Arg-239, and 300–303 (REGD) contribute to the substrate site.

The protein belongs to the NAD(P)-dependent epimerase/dehydratase family. In terms of assembly, homodimer. NAD(+) is required as a cofactor.

The enzyme catalyses UDP-alpha-D-glucose = UDP-alpha-D-galactose. It catalyses the reaction UDP-N-acetyl-alpha-D-glucosamine = UDP-N-acetyl-alpha-D-galactosamine. The protein operates within carbohydrate metabolism; galactose metabolism. In terms of biological role, catalyzes two distinct but analogous reactions: the reversible epimerization of UDP-glucose to UDP-galactose and the reversible epimerization of UDP-N-acetylglucosamine to UDP-N-acetylgalactosamine. The reaction with UDP-Gal plays a critical role in the Leloir pathway of galactose catabolism in which galactose is converted to the glycolytic intermediate glucose 6-phosphate. It contributes to the catabolism of dietary galactose and enables the endogenous biosynthesis of both UDP-Gal and UDP-GalNAc when exogenous sources are limited. Both UDP-sugar interconversions are important in the synthesis of glycoproteins and glycolipids. This Homo sapiens (Human) protein is UDP-glucose 4-epimerase.